Here is a 258-residue protein sequence, read N- to C-terminus: Acetylglutamate kinase (258 aa).

Substrate is bound by residues 44 to 45 (GG), Arg66, and Asn158. ATP is bound by residues 181 to 186 (DVSGIL) and 209 to 211 (IIT).

Belongs to the acetylglutamate kinase family. ArgB subfamily. As to quaternary structure, homodimer.

The protein localises to the cytoplasm. The catalysed reaction is N-acetyl-L-glutamate + ATP = N-acetyl-L-glutamyl 5-phosphate + ADP. Its pathway is amino-acid biosynthesis; L-arginine biosynthesis; N(2)-acetyl-L-ornithine from L-glutamate: step 2/4. In terms of biological role, catalyzes the ATP-dependent phosphorylation of N-acetyl-L-glutamate. The polypeptide is Acetylglutamate kinase (Citrobacter koseri (strain ATCC BAA-895 / CDC 4225-83 / SGSC4696)).